Reading from the N-terminus, the 331-residue chain is Protein FLX-like 1 (331 aa).

The disordered stretch occupies residues 1–51; it reads MSGRNRGPPPPSMKGGSYSGLQAPVHQPPFVRGLGGGPVPPPPHPSMIDDS. Residues 69–252 are a coiled coil; sequence ILEDRLAAQN…AEIANSETSA (184 aa). Residues 306–321 are compositionally biased toward low complexity; the sequence is QAAWAGGYDPQQQQQQ. Residues 306–331 form a disordered region; that stretch reads QAAWAGGYDPQQQQQQQPPPQGQGHR. Residues 322-331 show a composition bias toward pro residues; it reads QPPPQGQGHR.

This sequence belongs to the FLX family. As to quaternary structure, interacts with FRI.

In terms of biological role, has no transcriptional activation activity. The sequence is that of Protein FLX-like 1 (FLXL1) from Arabidopsis thaliana (Mouse-ear cress).